Reading from the N-terminus, the 293-residue chain is Small ribosomal subunit protein uS2 (293 aa).

The segment at Asp-265–Trp-293 is disordered.

This sequence belongs to the universal ribosomal protein uS2 family. Component of the small ribosomal subunit. Mature ribosomes consist of a small (40S) and a large (60S) subunit. The 40S subunit contains about 33 different proteins and 1 molecule of RNA (18S). The 60S subunit contains about 49 different proteins and 3 molecules of RNA (25S, 5.8S and 5S). Interacts with rps21.

The protein localises to the cytoplasm. In terms of biological role, required for the assembly and/or stability of the 40S ribosomal subunit. Required for the processing of the 20S rRNA-precursor to mature 18S rRNA in a late step of the maturation of 40S ribosomal subunits. The sequence is that of Small ribosomal subunit protein uS2 (rps0) from Emericella nidulans (strain FGSC A4 / ATCC 38163 / CBS 112.46 / NRRL 194 / M139) (Aspergillus nidulans).